The primary structure comprises 215 residues: FMN-dependent NADH:quinone oxidoreductase 1 (215 aa).

This sequence belongs to the azoreductase type 1 family. Homodimer. FMN serves as cofactor.

The enzyme catalyses 2 a quinone + NADH + H(+) = 2 a 1,4-benzosemiquinone + NAD(+). It carries out the reaction N,N-dimethyl-1,4-phenylenediamine + anthranilate + 2 NAD(+) = 2-(4-dimethylaminophenyl)diazenylbenzoate + 2 NADH + 2 H(+). In terms of biological role, quinone reductase that provides resistance to thiol-specific stress caused by electrophilic quinones. Its function is as follows. Also exhibits azoreductase activity. Catalyzes the reductive cleavage of the azo bond in aromatic azo compounds to the corresponding amines. The chain is FMN-dependent NADH:quinone oxidoreductase 1 from Lactiplantibacillus plantarum (strain ATCC BAA-793 / NCIMB 8826 / WCFS1) (Lactobacillus plantarum).